The chain runs to 693 residues: Tegument protein UL47 (693 aa).

2 disordered regions span residues 1–32 (MSAR…DGVG) and 48–126 (ELEA…GYLG). The segment covering 48–57 (ELEALEEMAG) has biased composition (acidic residues). The segment at 50-75 (EALEEMAGDEPPVRRRREGPRARRRR) is RNA-binding. The Nuclear localization signal signature appears at 63 to 75 (RRRREGPRARRRR). Positions 63-75 (RRRREGPRARRRR) are enriched in basic residues. Positions 647-670 (SVLGPGVRVVDIMSQFRKLLMGDE) match the Nuclear export signal motif.

It belongs to the alphaherpesvirinae HHV-1 UL47 family. Interacts with US3 kinase. Interacts with UL31 and UL34; these interactions seem important for efficient virion nuclear egress. Interacts with UL41/VHS. Phosphorylated by US3. This phosphorylation is required for proper nuclear localization.

Its subcellular location is the virion tegument. It is found in the host nucleus. The protein localises to the host cytoplasm. Functionally, tegument protein that can bind to various RNA transcripts. Plays a role in the attenuation of selective viral and cellular mRNA degradation by modulating the activity of host shutoff RNase UL41/VHS. Also plays a role in the primary envelopment of virions in the perinuclear space, probably by interacting with two nuclear egress proteins UL31 and UL34. The sequence is that of Tegument protein UL47 from Human herpesvirus 1 (strain F) (HHV-1).